We begin with the raw amino-acid sequence, 162 residues long: Caveolin-2 (162 aa).

The Cytoplasmic segment spans residues 1–86 (MGLETEKADV…FEISKYVIYK (86 aa)). Y19 carries the phosphotyrosine; by SRC modification. A phosphoserine mark is found at S20 and S23. Y27 is modified (phosphotyrosine; by SRC). Residue S36 is modified to Phosphoserine. An intramembrane region (helical) is located at residues 87 to 107 (FLTFFLAIPMAFAAGILFAIL). Over 108–162 (SCLHIWIIMPFVKTCLMVLPSVQTIWKTITDVVIAPLCTSVGRSFSSISLQLSHD) the chain is Cytoplasmic.

The protein belongs to the caveolin family. In terms of assembly, monomer or homodimer. Interacts with CAV1; the interaction forms a stable heterooligomeric complex that is required for targeting to lipid rafts and for caveolae formation. Tyrosine phosphorylated forms do not form heterooligomers with the Tyr-19-phosphorylated form existing as a monomer or dimer, and the Tyr-27-form as a monomer only. Interacts (tyrosine phosphorylated form) with the SH2 domain-containing proteins, RASA1, NCK1 and SRC. Interacts (tyrosine phosphorylated form) with INSR, the interaction (Tyr-27-phosphorylated form) is increased on insulin stimulation. Interacts (Tyr-19 phosphorylated form) with MAPK1 (phosphorylated form); the interaction, promoted by insulin, leads to nuclear location and MAPK1 activation. Interacts with STAT3; the interaction is increased on insulin-induced tyrosine phosphorylation leading to STAT activation. Post-translationally, phosphorylated on serine and tyrosine residues. CAV1 promotes phosphorylation on Ser-23 which then targets the complex to the plasma membrane, lipid rafts and caveolae. Phosphorylation on Ser-36 appears to modulate mitosis in endothelial cells. Phosphorylation on both Tyr-19 and Tyr-27 is required for insulin-induced 'Ser-727' phosphorylation of STAT3 and its activation. Phosphorylation on Tyr-19 is required for insulin-induced phosphorylation of MAPK1 and DNA binding of STAT3. Tyrosine phosphorylation is induced by both EGF and insulin (By. similarity).

It localises to the nucleus. The protein localises to the cytoplasm. Its subcellular location is the golgi apparatus membrane. The protein resides in the cell membrane. It is found in the membrane. It localises to the caveola. Its function is as follows. May act as a scaffolding protein within caveolar membranes. Interacts directly with G-protein alpha subunits and can functionally regulate their activity. Acts as an accessory protein in conjunction with CAV1 in targeting to lipid rafts and driving caveolae formation. The Ser-36 phosphorylated form has a role in modulating mitosis in endothelial cells. Positive regulator of cellular mitogenesis of the MAPK signaling pathway. Required for the insulin-stimulated nuclear translocation and activation of MAPK1 and STAT3, and the subsequent regulation of cell cycle progression. This chain is Caveolin-2 (CAV2), found in Mustela putorius furo (European domestic ferret).